We begin with the raw amino-acid sequence, 535 residues long: Arylsulfatase G (535 aa).

An N-terminal signal peptide occupies residues 1–18; that stretch reads MGWLFLKVLFLGVTFLGC. 3 residues coordinate Ca(2+): Asp-44, Asp-45, and Cys-84. The active-site Nucleophile is Cys-84. Cys-84 is subject to 3-oxoalanine (Cys). The N-linked (GlcNAc...) asparagine glycan is linked to Asn-117. Residue Lys-137 coordinates substrate. Residue His-139 is part of the active site. Ser-162 serves as a coordination point for substrate. Residue Asn-215 is glycosylated (N-linked (GlcNAc...) asparagine). Residue His-251 coordinates substrate. Positions 302 and 303 each coordinate Ca(2+). Residues Asn-356 and Asn-497 are each glycosylated (N-linked (GlcNAc...) asparagine).

It belongs to the sulfatase family. Ca(2+) serves as cofactor. In terms of processing, N-glycosylated with both high mannose and complex type sugars. The conversion to 3-oxoalanine (also known as C-formylglycine, FGly), of a serine or cysteine residue in prokaryotes and of a cysteine residue in eukaryotes, is critical for catalytic activity. Post-translationally, the 63-kDa precursor undergoes proteolytic processing in two steps, yielding two fragments in the first step (apparent molecular masses of 44 and 18 kDa). In the second step, the 44-kDa fragment is processed further to the 34- and 10-kDa chains. The 10-kDa chain is a cleavage product of the 44-kDa fragment but linked to the 18-kDa chain through a disulfide bridge.

The protein localises to the lysosome. It catalyses the reaction an aryl sulfate + H2O = a phenol + sulfate + H(+). The catalysed reaction is Hydrolysis of the 3-sulfate groups of the N-sulfo-D-glucosamine 3-O-sulfate units of heparin.. Displays arylsulfatase activity with pseudosubstrates at acidic pH, such as p-nitrocatechol sulfate. Catalyzes the hydrolysis of the 3-sulfate groups of the N-sulfo-D-glucosamine 3-O-sulfate units of heparin. This chain is Arylsulfatase G (ARSG), found in Canis lupus familiaris (Dog).